Here is a 399-residue protein sequence, read N- to C-terminus: Tryptophan synthase beta chain (399 aa).

An N6-(pyridoxal phosphate)lysine modification is found at K91.

This sequence belongs to the TrpB family. Tetramer of two alpha and two beta chains. It depends on pyridoxal 5'-phosphate as a cofactor.

It catalyses the reaction (1S,2R)-1-C-(indol-3-yl)glycerol 3-phosphate + L-serine = D-glyceraldehyde 3-phosphate + L-tryptophan + H2O. Its pathway is amino-acid biosynthesis; L-tryptophan biosynthesis; L-tryptophan from chorismate: step 5/5. In terms of biological role, the beta subunit is responsible for the synthesis of L-tryptophan from indole and L-serine. The polypeptide is Tryptophan synthase beta chain (Shouchella clausii (strain KSM-K16) (Alkalihalobacillus clausii)).